The primary structure comprises 156 residues: Methylated-DNA--protein-cysteine methyltransferase (156 aa).

Cysteine 120 serves as the catalytic Nucleophile; methyl group acceptor.

It belongs to the MGMT family.

The protein resides in the cytoplasm. It carries out the reaction a 6-O-methyl-2'-deoxyguanosine in DNA + L-cysteinyl-[protein] = S-methyl-L-cysteinyl-[protein] + a 2'-deoxyguanosine in DNA. The catalysed reaction is a 4-O-methyl-thymidine in DNA + L-cysteinyl-[protein] = a thymidine in DNA + S-methyl-L-cysteinyl-[protein]. Functionally, involved in the cellular defense against the biological effects of O6-methylguanine (O6-MeG) and O4-methylthymine (O4-MeT) in DNA. Repairs the methylated nucleobase in DNA by stoichiometrically transferring the methyl group to a cysteine residue in the enzyme. This is a suicide reaction: the enzyme is irreversibly inactivated. The protein is Methylated-DNA--protein-cysteine methyltransferase of Sulfurisphaera tokodaii (strain DSM 16993 / JCM 10545 / NBRC 100140 / 7) (Sulfolobus tokodaii).